Consider the following 508-residue polypeptide: Ribonuclease Y (508 aa).

The 67-residue stretch at 198–264 (TVSVINLPND…RLTIEKLITD (67 aa)) folds into the KH domain. The 94-residue stretch at 324–417 (VLTHSIEVAK…VQAADAVSAS (94 aa)) folds into the HD domain.

Belongs to the RNase Y family.

Functionally, endoribonuclease that initiates mRNA decay. This chain is Ribonuclease Y, found in Fusobacterium nucleatum subsp. nucleatum (strain ATCC 25586 / DSM 15643 / BCRC 10681 / CIP 101130 / JCM 8532 / KCTC 2640 / LMG 13131 / VPI 4355).